A 274-amino-acid chain; its full sequence is Diaminopimelate epimerase (274 aa).

Positions 11, 44, and 64 each coordinate substrate. Cys-73 (proton donor) is an active-site residue. Substrate contacts are provided by residues 74-75 (GN), Asn-157, Asn-190, and 208-209 (ER). The Proton acceptor role is filled by Cys-217. 218–219 (GS) provides a ligand contact to substrate.

Belongs to the diaminopimelate epimerase family. In terms of assembly, homodimer.

It localises to the cytoplasm. The enzyme catalyses (2S,6S)-2,6-diaminopimelate = meso-2,6-diaminopimelate. It functions in the pathway amino-acid biosynthesis; L-lysine biosynthesis via DAP pathway; DL-2,6-diaminopimelate from LL-2,6-diaminopimelate: step 1/1. Functionally, catalyzes the stereoinversion of LL-2,6-diaminopimelate (L,L-DAP) to meso-diaminopimelate (meso-DAP), a precursor of L-lysine and an essential component of the bacterial peptidoglycan. The sequence is that of Diaminopimelate epimerase from Histophilus somni (strain 129Pt) (Haemophilus somnus).